The following is a 186-amino-acid chain: Threonylcarbamoyl-AMP synthase (186 aa).

The 185-residue stretch at 2–186 folds into the YrdC-like domain; the sequence is STEFEQAVAA…ARTGAVIRPS (185 aa).

Belongs to the SUA5 family. TsaC subfamily.

It localises to the cytoplasm. The catalysed reaction is L-threonine + hydrogencarbonate + ATP = L-threonylcarbamoyladenylate + diphosphate + H2O. Its function is as follows. Required for the formation of a threonylcarbamoyl group on adenosine at position 37 (t(6)A37) in tRNAs that read codons beginning with adenine. Catalyzes the conversion of L-threonine, HCO(3)(-)/CO(2) and ATP to give threonylcarbamoyl-AMP (TC-AMP) as the acyladenylate intermediate, with the release of diphosphate. This is Threonylcarbamoyl-AMP synthase from Aeromonas salmonicida (strain A449).